A 453-amino-acid chain; its full sequence is 3-phosphoshikimate 1-carboxyvinyltransferase (453 aa).

A compositionally biased stretch (polar residues) spans 1-12 (MDVNVTSSTVRG). The tract at residues 1–21 (MDVNVTSSTVRGTTRAPPSKS) is disordered. 3-phosphoshikimate-binding residues include Lys-20, Ser-21, and Arg-25. Lys-20 is a phosphoenolpyruvate binding site. Residues Gly-97 and Arg-125 each coordinate phosphoenolpyruvate. The 3-phosphoshikimate site is built by Ser-170, Ser-171, Gln-172, Ser-198, Asp-330, and Lys-357. Gln-172 is a phosphoenolpyruvate binding site. Asp-330 acts as the Proton acceptor in catalysis. The phosphoenolpyruvate site is built by Arg-361 and Arg-404.

This sequence belongs to the EPSP synthase family. As to quaternary structure, monomer.

It is found in the cytoplasm. It carries out the reaction 3-phosphoshikimate + phosphoenolpyruvate = 5-O-(1-carboxyvinyl)-3-phosphoshikimate + phosphate. The protein operates within metabolic intermediate biosynthesis; chorismate biosynthesis. In terms of biological role, catalyzes the transfer of the enolpyruvyl moiety of phosphoenolpyruvate (PEP) to the 5-hydroxyl of shikimate-3-phosphate (S3P) to produce enolpyruvyl shikimate-3-phosphate and inorganic phosphate. This chain is 3-phosphoshikimate 1-carboxyvinyltransferase, found in Halorubrum lacusprofundi (strain ATCC 49239 / DSM 5036 / JCM 8891 / ACAM 34).